A 437-amino-acid chain; its full sequence is MNDSLSRLPREPADRLTKPFMRFLRIEATAGIILLLSTLLALGLANTAWSSSFLAFWEMPAGVRLGDIGIYRSLKHWINDGLMTFFFFVIALELKRELVLGELRNPRMAALPVAAALGGMAAPAGIYLLLVGGGPGASGWGTVMSTDTAFVIGCLALLGSRVPGSLRLFLLSLAIFDDIGAILIVAVGYGEPLNWVALGTGGLGFAFVAGIALLGIRSIPVYFAMGSAIWLAFDASGVHATLVGVILGLMTPARRWVSEIRLHAILDRVIAHPPGDHRSRDTAARSDLHRAGVATREAVSPIERLEIALHPWVAFAIMPLFAVSNAGIPIEDANFDVPLTIAIVVAFVVGKPAGIVLFSFLAVKLRLASRPEQLSWSLLAAGSLLTGIGFTMALFIAELAFEPELLIPVKLGVLGASVISAALGFMALTLLTSPNRR.

11 consecutive transmembrane segments (helical) span residues 29–49, 74–94, 111–131, 139–159, 168–188, 196–216, 229–249, 307–327, 341–361, 376–396, and 411–431; these read TAGI…NTAW, LKHW…ALEL, LPVA…LLLV, GWGT…ALLG, LFLL…VAVG, VALG…LLGI, IWLA…ILGL, IALH…SNAG, IAIV…FSFL, WSLL…ALFI, and LGVL…LTLL.

It belongs to the NhaA Na(+)/H(+) (TC 2.A.33) antiporter family.

The protein resides in the cell inner membrane. It catalyses the reaction Na(+)(in) + 2 H(+)(out) = Na(+)(out) + 2 H(+)(in). Its function is as follows. Na(+)/H(+) antiporter that extrudes sodium in exchange for external protons. This chain is Na(+)/H(+) antiporter NhaA, found in Rhizobium meliloti (strain 1021) (Ensifer meliloti).